Reading from the N-terminus, the 486-residue chain is MKALDQLSFDNRFARLGDAFSTQVLPEPIAEPRLVVASESAMALLDLDPAHAELPVFAELFSGHKLWEEADPRAMVYSGHQFGSYNPRLGDGRGLLLAEVLNDAGEHWDLHLKGAGQTPYSRMGDGRAVLRSSIREFLASEALHALGIPTSRALCVIGSSTPVWRETRESAAMLTRLAQSHVRFGHFEYFYYTKQPEQQRVLIDHVLEQHYPECRDAEQPYLAMFRTIVERNAELIARWQAYGFCHGVMNTDNMSILGITFDFGPYAFLDDFDANFICNHSDDRGRYSYANQVPIAHWNLSALAQALTTVIEVEPLKETLGLFLPLYQAHYLDLMRRRLGLTTAEEDDMALVERLLQCMQRGGVDYSLFFRKLGEQPAADALKVVRDDFIDLAAFDAWGADYLARCDREPGNAEGRRERMHAVNPLYVLRNYLAQKAIEAAEAGDYSEVRRLHQVLSHPFEEQPGMQAYAERPPEWGKHLEISCSS.

8 residues coordinate ATP: G90, G92, R93, K113, D125, G126, R176, and R183. D252 functions as the Proton acceptor in the catalytic mechanism. Mg(2+) contacts are provided by N253 and D262. D262 is a binding site for ATP.

It belongs to the SELO family. Requires Mg(2+) as cofactor. The cofactor is Mn(2+).

It catalyses the reaction L-seryl-[protein] + ATP = 3-O-(5'-adenylyl)-L-seryl-[protein] + diphosphate. It carries out the reaction L-threonyl-[protein] + ATP = 3-O-(5'-adenylyl)-L-threonyl-[protein] + diphosphate. The catalysed reaction is L-tyrosyl-[protein] + ATP = O-(5'-adenylyl)-L-tyrosyl-[protein] + diphosphate. The enzyme catalyses L-histidyl-[protein] + UTP = N(tele)-(5'-uridylyl)-L-histidyl-[protein] + diphosphate. It catalyses the reaction L-seryl-[protein] + UTP = O-(5'-uridylyl)-L-seryl-[protein] + diphosphate. It carries out the reaction L-tyrosyl-[protein] + UTP = O-(5'-uridylyl)-L-tyrosyl-[protein] + diphosphate. Nucleotidyltransferase involved in the post-translational modification of proteins. It can catalyze the addition of adenosine monophosphate (AMP) or uridine monophosphate (UMP) to a protein, resulting in modifications known as AMPylation and UMPylation. The protein is Protein nucleotidyltransferase YdiU of Pseudomonas putida (strain GB-1).